The chain runs to 157 residues: Ribonuclease H (157 aa).

Residues 1–146 (MPDLVAYTDG…ADELARAGMA (146 aa)) form the RNase H type-1 domain. Mg(2+)-binding residues include Asp9, Glu52, Asp74, and Asp138.

Belongs to the RNase H family. As to quaternary structure, monomer. The cofactor is Mg(2+).

The protein resides in the cytoplasm. The enzyme catalyses Endonucleolytic cleavage to 5'-phosphomonoester.. Its function is as follows. Endonuclease that specifically degrades the RNA of RNA-DNA hybrids. The protein is Ribonuclease H of Jannaschia sp. (strain CCS1).